A 201-amino-acid polypeptide reads, in one-letter code: Adenylyl-sulfate kinase (201 aa).

ATP is bound at residue 35–42 (GLSGSGKS). The active-site Phosphoserine intermediate is serine 109.

This sequence belongs to the APS kinase family.

It carries out the reaction adenosine 5'-phosphosulfate + ATP = 3'-phosphoadenylyl sulfate + ADP + H(+). Its pathway is sulfur metabolism; hydrogen sulfide biosynthesis; sulfite from sulfate: step 2/3. Its function is as follows. Catalyzes the synthesis of activated sulfate. The polypeptide is Adenylyl-sulfate kinase (Shigella boydii serotype 18 (strain CDC 3083-94 / BS512)).